The sequence spans 145 residues: Large ribosomal subunit protein uL15 (145 aa).

Positions methionine 1–glycine 13 are enriched in basic residues. Residues methionine 1 to tryptophan 44 form a disordered region.

This sequence belongs to the universal ribosomal protein uL15 family. Part of the 50S ribosomal subunit.

In terms of biological role, binds to the 23S rRNA. This is Large ribosomal subunit protein uL15 from Methanobrevibacter smithii (strain ATCC 35061 / DSM 861 / OCM 144 / PS).